A 104-amino-acid chain; its full sequence is V-type ATP synthase subunit F (104 aa).

Belongs to the V-ATPase F subunit family.

In terms of biological role, produces ATP from ADP in the presence of a proton gradient across the membrane. In Thermus thermophilus (strain ATCC 27634 / DSM 579 / HB8), this protein is V-type ATP synthase subunit F (atpF).